A 205-amino-acid chain; its full sequence is Beta-crystallin B2 (205 aa).

At alanine 2 the chain carries N-acetylalanine. Positions 2 to 16 (ASDHQTQAGKPQPLN) are N-terminal arm. Beta/gamma crystallin 'Greek key' domains are found at residues 17–56 (PKIIIFEQENFQGHSHELNGPCPNLKETGVEKAGSVLVQA) and 57–101 (GPWV…RPIK). Residues 102 to 106 (VDSQE) are connecting peptide. Beta/gamma crystallin 'Greek key' domains lie at 107 to 148 (HKII…RVQS) and 149 to 191 (GTWV…RRIR). Positions 193 to 205 (MQWHQRGAFHPTN) are C-terminal arm.

The protein belongs to the beta/gamma-crystallin family. In terms of assembly, homo/heterodimer, or complexes of higher-order. The structure of beta-crystallin oligomers seems to be stabilized through interactions between the N-terminal arms.

In terms of biological role, crystallins are the dominant structural components of the vertebrate eye lens. This Oryctolagus cuniculus (Rabbit) protein is Beta-crystallin B2 (CRYBB2).